Consider the following 390-residue polypeptide: 23S rRNA (uracil(747)-C(5))-methyltransferase RlmC (390 aa).

Residues Cys12, Cys20, Cys23, and Cys100 each contribute to the [4Fe-4S] cluster site. Residues Gln225, Phe254, Glu275, and Asn322 each contribute to the S-adenosyl-L-methionine site. The Nucleophile role is filled by Cys349.

Belongs to the class I-like SAM-binding methyltransferase superfamily. RNA M5U methyltransferase family. RlmC subfamily.

It catalyses the reaction uridine(747) in 23S rRNA + S-adenosyl-L-methionine = 5-methyluridine(747) in 23S rRNA + S-adenosyl-L-homocysteine + H(+). In terms of biological role, catalyzes the formation of 5-methyl-uridine at position 747 (m5U747) in 23S rRNA. The polypeptide is 23S rRNA (uracil(747)-C(5))-methyltransferase RlmC (Shewanella baltica (strain OS223)).